The primary structure comprises 514 residues: Adenylosuccinate synthetase 2, chloroplastic (514 aa).

The N-terminal 56 residues, 1-56 (MAMAAAAAVASQGLLATSSQQQKKSSAKLICNAATFFSGKRLLWVKSCNNGAVGLR), are a transit peptide targeting the chloroplast. GTP contacts are provided by residues 100–106 (GDEGKGK) and 128–130 (GHT). Asp-101 acts as the Proton acceptor in catalysis. 2 residues coordinate Mg(2+): Asp-101 and Gly-128. IMP-binding positions include 101-104 (DEGK), 126-129 (NAGH), Thr-218, Arg-232, Gln-312, Thr-327, and Arg-391. His-129 (proton donor) is an active-site residue. 387-393 (TTTGRPR) provides a ligand contact to substrate. GTP is bound by residues Arg-393, 419 to 421 (KLD), and 502 to 504 (GVG).

This sequence belongs to the adenylosuccinate synthetase family. Homodimer. It depends on Mg(2+) as a cofactor.

It is found in the plastid. Its subcellular location is the chloroplast. The enzyme catalyses IMP + L-aspartate + GTP = N(6)-(1,2-dicarboxyethyl)-AMP + GDP + phosphate + 2 H(+). Its pathway is purine metabolism; AMP biosynthesis via de novo pathway; AMP from IMP: step 1/2. In terms of biological role, plays an important role in the de novo pathway and in the salvage pathway of purine nucleotide biosynthesis. Catalyzes the first committed step in the biosynthesis of AMP from IMP. In Physcomitrium patens (Spreading-leaved earth moss), this protein is Adenylosuccinate synthetase 2, chloroplastic.